The primary structure comprises 200 residues: Peptidyl-tRNA hydrolase (200 aa).

Y15 contacts tRNA. Catalysis depends on H20, which acts as the Proton acceptor. TRNA-binding residues include Y66, N68, and N114.

The protein belongs to the PTH family. In terms of assembly, monomer.

The protein localises to the cytoplasm. It catalyses the reaction an N-acyl-L-alpha-aminoacyl-tRNA + H2O = an N-acyl-L-amino acid + a tRNA + H(+). Functionally, hydrolyzes ribosome-free peptidyl-tRNAs (with 1 or more amino acids incorporated), which drop off the ribosome during protein synthesis, or as a result of ribosome stalling. In terms of biological role, catalyzes the release of premature peptidyl moieties from peptidyl-tRNA molecules trapped in stalled 50S ribosomal subunits, and thus maintains levels of free tRNAs and 50S ribosomes. This Paraburkholderia phymatum (strain DSM 17167 / CIP 108236 / LMG 21445 / STM815) (Burkholderia phymatum) protein is Peptidyl-tRNA hydrolase.